The sequence spans 435 residues: Glutamate-1-semialdehyde 2,1-aminomutase (435 aa).

The residue at position 266 (Lys-266) is an N6-(pyridoxal phosphate)lysine.

This sequence belongs to the class-III pyridoxal-phosphate-dependent aminotransferase family. HemL subfamily. As to quaternary structure, homodimer. The cofactor is pyridoxal 5'-phosphate.

It localises to the cytoplasm. The enzyme catalyses (S)-4-amino-5-oxopentanoate = 5-aminolevulinate. The protein operates within porphyrin-containing compound metabolism; protoporphyrin-IX biosynthesis; 5-aminolevulinate from L-glutamyl-tRNA(Glu): step 2/2. In Coxiella burnetii (strain CbuG_Q212) (Coxiella burnetii (strain Q212)), this protein is Glutamate-1-semialdehyde 2,1-aminomutase.